Reading from the N-terminus, the 294-residue chain is Farnesyl diphosphate synthase (294 aa).

Isopentenyl diphosphate contacts are provided by Lys-45, Arg-48, and His-77. Asp-84 and Asp-90 together coordinate Mg(2+). Arg-95 provides a ligand contact to (2E)-geranyl diphosphate. Arg-96 is an isopentenyl diphosphate binding site. (2E)-geranyl diphosphate contacts are provided by Lys-181, Thr-182, and Gln-220.

The protein belongs to the FPP/GGPP synthase family. It depends on Mg(2+) as a cofactor.

It is found in the cytoplasm. The catalysed reaction is isopentenyl diphosphate + (2E)-geranyl diphosphate = (2E,6E)-farnesyl diphosphate + diphosphate. This Buchnera aphidicola subsp. Schizaphis graminum (strain Sg) protein is Farnesyl diphosphate synthase (ispA).